Consider the following 499-residue polypeptide: Lipopolysaccharide core galacturonosyltransferase RgtA (499 aa).

Transmembrane regions (helical) follow at residues 11-31, 74-94, 103-123, 125-145, 165-185, 199-219, 248-268, 291-311, 316-336, and 351-371; these read TAGL…IVLP, IGAL…FYGL, EALA…SYMA, QDLT…YGFF, IGLI…IAIL, MLAA…WLQG, LLAF…IFAA, MMLA…STTV, LDPF…AAGL, and VLMA…GLIG.

This sequence belongs to the glycosyltransferase 83 family.

It is found in the cell inner membrane. It functions in the pathway bacterial outer membrane biogenesis; LPS core biosynthesis. In terms of biological role, involved in the modification of the lipopolysaccharide (LPS) inner core. Catalyzes the transfer of a galacturonic acid (GalA) residue to the 4-position of the outer Kdo (3-deoxy-D-manno-octulosonic acid) residue of the LPS inner core, using dodecaprenyl phosphate-GalA as the donor substrate. GalA addition by RgtA is required for RgtB activity. This chain is Lipopolysaccharide core galacturonosyltransferase RgtA, found in Rhizobium johnstonii (strain DSM 114642 / LMG 32736 / 3841) (Rhizobium leguminosarum bv. viciae).